Consider the following 563-residue polypeptide: Rhodopsin kinase GRK1 (563 aa).

The interval 1–15 (MDFGSLETVVANSAF) is interaction with RCVRN. Residues 1-189 (MDFGSLETVV…LEAQPMGEDW (189 aa)) form an N-terminal region. Position 5 is a phosphoserine (Ser5). Position 8 is a phosphothreonine (Thr8). Ser21 is modified (phosphoserine; by PKA and autocatalysis). The 118-residue stretch at 58 to 175 (FESVCLEQPI…LGSLYFLRFL (118 aa)) folds into the RGS domain. A Protein kinase domain is found at 190-455 (FLDFRVLGKG…CDKLRAHPLF (266 aa)). ATP contacts are provided by residues 196-204 (LGKGGFGEV) and Lys219. The active-site Proton acceptor is the Asp317. Residues 456–521 (KDLNWRQLEA…GNCPIPWQEE (66 aa)) form the AGC-kinase C-terminal domain. The interval 456–563 (KDLNWRQLEA…SSKSGMCLVS (108 aa)) is C-terminal. Ser491 is subject to Phosphoserine; by autocatalysis. Thr492 is subject to Phosphothreonine; by autocatalysis. The segment at 539 to 563 (QMPDDMKGISGGSSSSSKSGMCLVS) is disordered. Low complexity predominate over residues 550-563 (GSSSSSKSGMCLVS). Cys560 carries the cysteine methyl ester modification. Cys560 carries S-farnesyl cysteine lipidation. Residues 561-563 (LVS) constitute a propeptide, removed in mature form.

Belongs to the protein kinase superfamily. AGC Ser/Thr protein kinase family. GPRK subfamily. As to quaternary structure, interacts (via N-terminus) with RCVRN (via C-terminus); the interaction is Ca(2+)-dependent. Interacts (when prenylated) with PDE6D; this promotes release from membranes. May form a complex composed of RHO, GRK1 and RCVRN in a Ca(2+)-dependent manner; RCVRN prevents the interaction between GRK1 and RHO. In terms of processing, autophosphorylated, Ser-21 is a minor site of autophosphorylation compared to Ser-491 and Thr-492. Phosphorylation at Ser-21 is regulated by light and activated by cAMP. Post-translationally, farnesylation is required for full activity. Retinal-specific. Expressed in rods and cones cells.

The protein localises to the membrane. The protein resides in the cell projection. It is found in the cilium. It localises to the photoreceptor outer segment. It carries out the reaction L-threonyl-[rhodopsin] + ATP = O-phospho-L-threonyl-[rhodopsin] + ADP + H(+). It catalyses the reaction L-seryl-[rhodopsin] + ATP = O-phospho-L-seryl-[rhodopsin] + ADP + H(+). With respect to regulation, inhibited by RCVRN, which prevents the interaction between GRK1 and RHO. Inhibition is calcium-dependent. Inhibited by phosphorylation of Ser-21. Functionally, retina-specific kinase involved in the signal turnoff via phosphorylation of rhodopsin (RHO), the G protein- coupled receptor that initiates the phototransduction cascade. This rapid desensitization is essential for scotopic vision and permits rapid adaptation to changes in illumination. May play a role in the maintenance of the outer nuclear layer in the retina. The polypeptide is Rhodopsin kinase GRK1 (Homo sapiens (Human)).